The primary structure comprises 464 residues: MNTLFDKIWDAHVVTTVEDGPTQLYIDRLYCHEVTSPQAFAGLRARGIKVFRPEKVYCMPDHNTPTHDQDKPIEDPVSKTQVDTLTKNAADFGLTHYGMMDKRNGIIHVVGPERGLTLPGMTIVCGDSHTSTHGAMGAVAFGIGTSEVEMVLASQCILQSRPKTMRITVDGKLGKGVTAKDIALYMMSKMTTSGATGYFVEYAGEAIRSLTMEGRLTLCNLSIEMGARGGMIAPDEVTFEYIKGRENAPQGEEWDQAVQYWKTLKSEDDAVFDKEVHFDAADIEPMITYGTNPGMGMGITQHIPTTDGMNETTKASFLKSLDYMGFQPGEALLGKKIDYVFLGACTNGRIEDFRAFASIVKGHQKAEHVIAWLVPGSWMVDAQIREEGLDKILEDAGFAIRQPGCSACLAMNDDKIPAGKYSVSTSNRNFEGRQGPGARTLLASPLVAAAAAITGVIADPRELM.

[4Fe-4S] cluster is bound by residues Cys345, Cys405, and Cys408.

This sequence belongs to the aconitase/IPM isomerase family. LeuC type 1 subfamily. In terms of assembly, heterodimer of LeuC and LeuD. [4Fe-4S] cluster serves as cofactor.

It carries out the reaction (2R,3S)-3-isopropylmalate = (2S)-2-isopropylmalate. The protein operates within amino-acid biosynthesis; L-leucine biosynthesis; L-leucine from 3-methyl-2-oxobutanoate: step 2/4. Its function is as follows. Catalyzes the isomerization between 2-isopropylmalate and 3-isopropylmalate, via the formation of 2-isopropylmaleate. The protein is 3-isopropylmalate dehydratase large subunit of Bacteroides fragilis (strain ATCC 25285 / DSM 2151 / CCUG 4856 / JCM 11019 / LMG 10263 / NCTC 9343 / Onslow / VPI 2553 / EN-2).